The following is a 155-amino-acid chain: Interleukin-2 (155 aa).

An N-terminal signal peptide occupies residues methionine 1–serine 20. Residue threonine 23 is glycosylated (O-linked (GalNAc...) threonine). A disulfide bridge links cysteine 78 with cysteine 126.

It belongs to the IL-2 family.

The protein localises to the secreted. Functionally, cytokine produced by activated CD4-positive helper T-cells and to a lesser extend activated CD8-positive T-cells and natural killer (NK) cells that plays pivotal roles in the immune response and tolerance. Binds to a receptor complex composed of either the high-affinity trimeric IL-2R (IL2RA/CD25, IL2RB/CD122 and IL2RG/CD132) or the low-affinity dimeric IL-2R (IL2RB and IL2RG). Interaction with the receptor leads to oligomerization and conformation changes in the IL-2R subunits resulting in downstream signaling starting with phosphorylation of JAK1 and JAK3. In turn, JAK1 and JAK3 phosphorylate the receptor to form a docking site leading to the phosphorylation of several substrates including STAT5. This process leads to activation of several pathways including STAT, phosphoinositide-3-kinase/PI3K and mitogen-activated protein kinase/MAPK pathways. Functions as a T-cell growth factor and can increase NK-cell cytolytic activity as well. Promotes strong proliferation of activated B-cells and subsequently immunoglobulin production. Plays a pivotal role in regulating the adaptive immune system by controlling the survival and proliferation of regulatory T-cells, which are required for the maintenance of immune tolerance. Moreover, participates in the differentiation and homeostasis of effector T-cell subsets, including Th1, Th2, Th17 as well as memory CD8-positive T-cells. This is Interleukin-2 (Il2) from Rattus norvegicus (Rat).